The chain runs to 56 residues: Meucin-25 (56 aa).

Positions 1-31 are cleaved as a signal peptide; the sequence is MFRIEYSLVQLLLRNVTIPLLLIIQMHIMSS.

Belongs to the non-disulfide-bridged peptide (NDBP) superfamily. Antimalarial peptide (group 5) family. In terms of tissue distribution, expressed by the venom gland.

The protein localises to the secreted. Functionally, this synthetic cationic peptide inhibits the development of Plasmodium berghei ookinetes, kills intraerythrocytic P.falciparum, and is cytotoxic to the Drosophila S2 cell at micromolar concentrations. No antibacterial, antifungal and hemolytic activities have been found at micromolar concentrations. This is Meucin-25 from Mesobuthus eupeus (Lesser Asian scorpion).